The following is a 375-amino-acid chain: Carbamoyl phosphate synthase small chain (375 aa).

Residues 1–186 are CPSase; sequence MRALLALEDG…LEPGGCAWVG (186 aa). L-glutamine contacts are provided by S45, G238, and G240. The Glutamine amidotransferase type-1 domain maps to 190 to 375; it reads RLVVYDFGIK…RNMVREAAGC (186 aa). The active-site Nucleophile is the C265. L-glutamine-binding residues include L266, Q269, N307, G309, and F310. Active-site residues include H348 and E350.

It belongs to the CarA family. As to quaternary structure, composed of two chains; the small (or glutamine) chain promotes the hydrolysis of glutamine to ammonia, which is used by the large (or ammonia) chain to synthesize carbamoyl phosphate. Tetramer of heterodimers (alpha,beta)4.

It catalyses the reaction hydrogencarbonate + L-glutamine + 2 ATP + H2O = carbamoyl phosphate + L-glutamate + 2 ADP + phosphate + 2 H(+). The enzyme catalyses L-glutamine + H2O = L-glutamate + NH4(+). The protein operates within amino-acid biosynthesis; L-arginine biosynthesis; carbamoyl phosphate from bicarbonate: step 1/1. Its pathway is pyrimidine metabolism; UMP biosynthesis via de novo pathway; (S)-dihydroorotate from bicarbonate: step 1/3. In terms of biological role, small subunit of the glutamine-dependent carbamoyl phosphate synthetase (CPSase). CPSase catalyzes the formation of carbamoyl phosphate from the ammonia moiety of glutamine, carbonate, and phosphate donated by ATP, constituting the first step of 2 biosynthetic pathways, one leading to arginine and/or urea and the other to pyrimidine nucleotides. The small subunit (glutamine amidotransferase) binds and cleaves glutamine to supply the large subunit with the substrate ammonia. The protein is Carbamoyl phosphate synthase small chain of Nitratidesulfovibrio vulgaris (strain ATCC 29579 / DSM 644 / CCUG 34227 / NCIMB 8303 / VKM B-1760 / Hildenborough) (Desulfovibrio vulgaris).